The following is a 483-amino-acid chain: Cysteine--tRNA ligase (483 aa).

Cys-29 serves as a coordination point for Zn(2+). A 'HIGH' region motif is present at residues Pro-31–His-41. The Zn(2+) site is built by Cys-221, His-246, and Glu-250. The short motif at Lys-278 to Ser-282 is the 'KMSKS' region element. Lys-281 contacts ATP.

The protein belongs to the class-I aminoacyl-tRNA synthetase family. In terms of assembly, monomer. The cofactor is Zn(2+).

The protein localises to the cytoplasm. The enzyme catalyses tRNA(Cys) + L-cysteine + ATP = L-cysteinyl-tRNA(Cys) + AMP + diphosphate. The chain is Cysteine--tRNA ligase from Chlorobium luteolum (strain DSM 273 / BCRC 81028 / 2530) (Pelodictyon luteolum).